A 185-amino-acid chain; its full sequence is Ribosome-recycling factor (185 aa).

The protein belongs to the RRF family.

The protein localises to the cytoplasm. Its function is as follows. Responsible for the release of ribosomes from messenger RNA at the termination of protein biosynthesis. May increase the efficiency of translation by recycling ribosomes from one round of translation to another. This chain is Ribosome-recycling factor, found in Rhodospirillum centenum (strain ATCC 51521 / SW).